Reading from the N-terminus, the 401-residue chain is MSKLVLILNCGSSSLKFAILDPATGEEKLSGLAEAFFLPEARIKWKLNGEKGNADLGAGAAHTEALNFIASNILNDELKNSIAAIGHRIVHGGEKYTQSVIVTDEVVKGIEDAAQFAPLHNPAHLIGIREAFKAFPHLKDKNVVVFDTAFHQTMPEEAFLYALPYSLYKEHGVRRYGAHGTSHYFVSREVAEYVGKPADQVNAIICHLGNGGSVSVVRNGQCIDTSMGLTPLEGLVMGTRCGDIDPAIVFYLYKTLGMSMDQIEETLVKKSGLLGLTEVTSDCRYAEDNYDDESKPETKRALNVYSYRLAKYIGAYMAVLGDDHLDAIAFTGGIGENSAHVRELALNHLKLFGIKIDHERNLATRFGKDGVITTDDSAFKAIVLPTNEELVIAQDTAKLCF.

Asparagine 9 lines the Mg(2+) pocket. Lysine 16 is an ATP binding site. A substrate-binding site is contributed by arginine 88. Residue aspartate 147 is the Proton donor/acceptor of the active site. ATP is bound by residues 207 to 211 (HLGNG), 282 to 284 (DCR), and 333 to 337 (GIGEN). Glutamate 388 is a binding site for Mg(2+).

Belongs to the acetokinase family. In terms of assembly, homodimer. Requires Mg(2+) as cofactor. Mn(2+) serves as cofactor.

Its subcellular location is the cytoplasm. The enzyme catalyses acetate + ATP = acetyl phosphate + ADP. It functions in the pathway metabolic intermediate biosynthesis; acetyl-CoA biosynthesis; acetyl-CoA from acetate: step 1/2. Functionally, catalyzes the formation of acetyl phosphate from acetate and ATP. Can also catalyze the reverse reaction. In Haemophilus influenzae (strain PittGG), this protein is Acetate kinase.